Here is a 362-residue protein sequence, read N- to C-terminus: Phospho-N-acetylmuramoyl-pentapeptide-transferase (362 aa).

The next 10 membrane-spanning stretches (helical) occupy residues 27–47 (VMAAMTALLISFACGPAVIRW), 73–93 (TMGGALIIIAIAVTTLLWGDL), 97–117 (YVWVTLLVTLGFGAVGWVDDW), 132–152 (WKYLWTSLIALAAALFLGLTA), 160–180 (LIVPFFKAVSYPLGMLGFVAL), 200–220 (GLAIMPTVMVAGALAIFAYVA), 237–257 (AGELAVFCGALAGAGLGFLWF), 264–284 (VFMGDVGALALGAALGTVAVV), 289–309 (IVLFIMGGLFVAETLSVMVQV), and 339–359 (QVVVRFWIITIMLVLFGLSTL).

It belongs to the glycosyltransferase 4 family. MraY subfamily. It depends on Mg(2+) as a cofactor.

The protein localises to the cell inner membrane. The catalysed reaction is UDP-N-acetyl-alpha-D-muramoyl-L-alanyl-gamma-D-glutamyl-meso-2,6-diaminopimeloyl-D-alanyl-D-alanine + di-trans,octa-cis-undecaprenyl phosphate = di-trans,octa-cis-undecaprenyl diphospho-N-acetyl-alpha-D-muramoyl-L-alanyl-D-glutamyl-meso-2,6-diaminopimeloyl-D-alanyl-D-alanine + UMP. It functions in the pathway cell wall biogenesis; peptidoglycan biosynthesis. Catalyzes the initial step of the lipid cycle reactions in the biosynthesis of the cell wall peptidoglycan: transfers peptidoglycan precursor phospho-MurNAc-pentapeptide from UDP-MurNAc-pentapeptide onto the lipid carrier undecaprenyl phosphate, yielding undecaprenyl-pyrophosphoryl-MurNAc-pentapeptide, known as lipid I. In Aromatoleum aromaticum (strain DSM 19018 / LMG 30748 / EbN1) (Azoarcus sp. (strain EbN1)), this protein is Phospho-N-acetylmuramoyl-pentapeptide-transferase.